We begin with the raw amino-acid sequence, 282 residues long: Large ribosomal subunit protein uL4c (282 aa).

The N-terminal 43 residues, Met1 to Ser43, are a transit peptide targeting the chloroplast. Disordered stretches follow at residues Arg86–Val133 and Arg251–Glu282. Residues Glu255 to Glu282 are compositionally biased toward acidic residues.

The protein belongs to the universal ribosomal protein uL4 family. As to quaternary structure, part of the 50S ribosomal subunit.

It localises to the plastid. The protein localises to the chloroplast. Functionally, this protein binds directly and specifically to 23S rRNA. May play a role in plastid transcriptional regulation. This is Large ribosomal subunit protein uL4c (RPL4) from Nicotiana tabacum (Common tobacco).